Reading from the N-terminus, the 103-residue chain is Co-chaperonin GroES (103 aa).

The segment at glycine 31–valine 67 is disordered.

Belongs to the GroES chaperonin family. In terms of assembly, heptamer of 7 subunits arranged in a ring. Interacts with the chaperonin GroEL.

It localises to the cytoplasm. Its function is as follows. Together with the chaperonin GroEL, plays an essential role in assisting protein folding. The GroEL-GroES system forms a nano-cage that allows encapsulation of the non-native substrate proteins and provides a physical environment optimized to promote and accelerate protein folding. GroES binds to the apical surface of the GroEL ring, thereby capping the opening of the GroEL channel. The polypeptide is Co-chaperonin GroES (Prochlorococcus marinus (strain NATL2A)).